A 417-amino-acid polypeptide reads, in one-letter code: Acetate kinase (417 aa).

Asn-7 lines the Mg(2+) pocket. Lys-14 is a binding site for ATP. Arg-104 contacts substrate. Asp-162 serves as the catalytic Proton donor/acceptor. ATP is bound by residues 222-226 (HLGNG), 297-299 (DMR), and 346-350 (GIGEN). Glu-401 provides a ligand contact to Mg(2+).

Belongs to the acetokinase family. As to quaternary structure, homodimer. Mg(2+) is required as a cofactor. The cofactor is Mn(2+).

The protein resides in the cytoplasm. It catalyses the reaction acetate + ATP = acetyl phosphate + ADP. It participates in metabolic intermediate biosynthesis; acetyl-CoA biosynthesis; acetyl-CoA from acetate: step 1/2. In terms of biological role, catalyzes the formation of acetyl phosphate from acetate and ATP. Can also catalyze the reverse reaction. The chain is Acetate kinase from Chloroherpeton thalassium (strain ATCC 35110 / GB-78).